We begin with the raw amino-acid sequence, 346 residues long: Biotin synthase (346 aa).

The span at 1 to 12 (MPDTATVSSESE) shows a compositional bias: polar residues. The disordered stretch occupies residues 1-21 (MPDTATVSSESEFSGHAHVAA). A Radical SAM core domain is found at 64-292 (NKVQLCSLLS…QSMVRLSAGR (229 aa)). Positions 79, 83, and 86 each coordinate [4Fe-4S] cluster. C123, C155, C215, and R287 together coordinate [2Fe-2S] cluster.

This sequence belongs to the radical SAM superfamily. Biotin synthase family. Homodimer. [4Fe-4S] cluster serves as cofactor. Requires [2Fe-2S] cluster as cofactor.

It catalyses the reaction (4R,5S)-dethiobiotin + (sulfur carrier)-SH + 2 reduced [2Fe-2S]-[ferredoxin] + 2 S-adenosyl-L-methionine = (sulfur carrier)-H + biotin + 2 5'-deoxyadenosine + 2 L-methionine + 2 oxidized [2Fe-2S]-[ferredoxin]. It participates in cofactor biosynthesis; biotin biosynthesis; biotin from 7,8-diaminononanoate: step 2/2. Its function is as follows. Catalyzes the conversion of dethiobiotin (DTB) to biotin by the insertion of a sulfur atom into dethiobiotin via a radical-based mechanism. The chain is Biotin synthase from Myxococcus xanthus (strain DK1622).